The following is a 233-amino-acid chain: 1-(5-phosphoribosyl)-5-[(5-phosphoribosylamino)methylideneamino] imidazole-4-carboxamide isomerase (233 aa).

The active-site Proton acceptor is Asp-8. Asp-125 functions as the Proton donor in the catalytic mechanism.

It belongs to the HisA/HisF family.

Its subcellular location is the cytoplasm. It carries out the reaction 1-(5-phospho-beta-D-ribosyl)-5-[(5-phospho-beta-D-ribosylamino)methylideneamino]imidazole-4-carboxamide = 5-[(5-phospho-1-deoxy-D-ribulos-1-ylimino)methylamino]-1-(5-phospho-beta-D-ribosyl)imidazole-4-carboxamide. It participates in amino-acid biosynthesis; L-histidine biosynthesis; L-histidine from 5-phospho-alpha-D-ribose 1-diphosphate: step 4/9. In Thermococcus kodakarensis (strain ATCC BAA-918 / JCM 12380 / KOD1) (Pyrococcus kodakaraensis (strain KOD1)), this protein is 1-(5-phosphoribosyl)-5-[(5-phosphoribosylamino)methylideneamino] imidazole-4-carboxamide isomerase.